We begin with the raw amino-acid sequence, 782 residues long: Coiled-coil alpha-helical rod protein 1 (782 aa).

Basic and acidic residues-rich tracts occupy residues 62 to 74 (ERDVSSDRQEPGR) and 208 to 218 (ETRRAGEAKEL). 2 disordered regions span residues 62-82 (ERDVSSDRQEPGRRGRSWGLE) and 182-218 (LTQAHEEALSSLTSKAEGLEKSLSSLETRRAGEAKEL). 3 coiled-coil regions span residues 82–314 (EGSQ…ELTR), 344–437 (LMVQ…NAVS), and 498–691 (VADV…QQEG).

It localises to the cytoplasm. The protein resides in the nucleus. Functionally, may be a regulator of keratinocyte proliferation or differentiation. This is Coiled-coil alpha-helical rod protein 1 (CCHCR1) from Pan paniscus (Pygmy chimpanzee).